A 100-amino-acid polypeptide reads, in one-letter code: Apolipoprotein C-II (100 aa).

Residues 1–22 (MGTRFLLALFLVLLVLGFEVQG) form the signal peptide. The interval 66 to 74 (TVDEKLRDM) is lipid binding. The segment at 78 to 100 (STAAVSTYAGIFTDQLLTLLKGD) is lipoprotein lipase cofactor.

This sequence belongs to the apolipoprotein C2 family. Post-translationally, proapolipoprotein C-II is synthesized as a sialic acid containing glycoprotein which is subsequently desialylated prior to its proteolytic processing. Proapolipoprotein C-II, the major form found in plasma undergoes proteolytic cleavage of its N-terminal hexapeptide to generate apolipoprotein C-II, which occurs as the minor form in plasma.

The protein resides in the secreted. Its function is as follows. Component of chylomicrons, very low-density lipoproteins (VLDL), low-density lipoproteins (LDL), and high-density lipoproteins (HDL) in plasma. Plays an important role in lipoprotein metabolism as an activator of lipoprotein lipase. Both proapolipoprotein C-II and apolipoprotein C-II can activate lipoprotein lipase. The chain is Apolipoprotein C-II (APOC2) from Otolemur garnettii (Small-eared galago).